Consider the following 400-residue polypeptide: Sensory histidine kinase/phosphatase NtrB (400 aa).

Composition is skewed to low complexity over residues 1–10 (MARASAAAPL) and 18–27 (RAPSSSYRPV). Residues 1–27 (MARASAAAPLPRRPARPRAPSSSYRPV) are disordered. A PAS domain is found at 29–99 (PCIDPSVMLN…IEQVQQGRHR (71 aa)). Positions 163-381 (MLGHEVKNPL…VFKVSLPMFD (219 aa)) constitute a Histidine kinase domain. A Phosphohistidine; by autocatalysis modification is found at histidine 166.

Autophosphorylated.

It is found in the cytoplasm. It carries out the reaction ATP + protein L-histidine = ADP + protein N-phospho-L-histidine.. Functionally, member of the two-component regulatory system NtrB/NtrC, which controls expression of the nitrogen-regulated (ntr) genes in response to nitrogen limitation. Under conditions of nitrogen limitation, NtrB autophosphorylates and transfers the phosphoryl group to NtrC. In the presence of nitrogen, acts as a phosphatase that dephosphorylates and inactivates NtrC. The polypeptide is Sensory histidine kinase/phosphatase NtrB (Azospirillum brasilense).